The primary structure comprises 520 residues: 2-isopropylmalate synthase (520 aa).

Residues 12-274 (VVIFDTTLRD…WCNVESTMLT (263 aa)) enclose the Pyruvate carboxyltransferase domain. Residues D21, H209, H211, and N245 each contribute to the Mn(2+) site. The interval 398 to 520 (KLTSLTVIAG…RDVPSAAAAS (123 aa)) is regulatory domain.

The protein belongs to the alpha-IPM synthase/homocitrate synthase family. LeuA type 1 subfamily. In terms of assembly, homodimer. Mn(2+) is required as a cofactor.

Its subcellular location is the cytoplasm. It carries out the reaction 3-methyl-2-oxobutanoate + acetyl-CoA + H2O = (2S)-2-isopropylmalate + CoA + H(+). It participates in amino-acid biosynthesis; L-leucine biosynthesis; L-leucine from 3-methyl-2-oxobutanoate: step 1/4. In terms of biological role, catalyzes the condensation of the acetyl group of acetyl-CoA with 3-methyl-2-oxobutanoate (2-ketoisovalerate) to form 3-carboxy-3-hydroxy-4-methylpentanoate (2-isopropylmalate). This is 2-isopropylmalate synthase from Nitrobacter hamburgensis (strain DSM 10229 / NCIMB 13809 / X14).